Reading from the N-terminus, the 108-residue chain is Nucleoid-associated protein BamMC406_1737 (108 aa).

The segment covering 85-95 (ATSQEKMSGMT) has biased composition (polar residues). Residues 85–108 (ATSQEKMSGMTSGLPLPPGFKLPF) are disordered. The span at 99–108 (PLPPGFKLPF) shows a compositional bias: pro residues.

It belongs to the YbaB/EbfC family. In terms of assembly, homodimer.

Its subcellular location is the cytoplasm. It localises to the nucleoid. Its function is as follows. Binds to DNA and alters its conformation. May be involved in regulation of gene expression, nucleoid organization and DNA protection. This Burkholderia ambifaria (strain MC40-6) protein is Nucleoid-associated protein BamMC406_1737.